The chain runs to 335 residues: Tetraacyldisaccharide 4'-kinase (335 aa).

Residue 58–65 participates in ATP binding; that stretch reads TVGGSGKT.

It belongs to the LpxK family.

The enzyme catalyses a lipid A disaccharide + ATP = a lipid IVA + ADP + H(+). Its pathway is glycolipid biosynthesis; lipid IV(A) biosynthesis; lipid IV(A) from (3R)-3-hydroxytetradecanoyl-[acyl-carrier-protein] and UDP-N-acetyl-alpha-D-glucosamine: step 6/6. Transfers the gamma-phosphate of ATP to the 4'-position of a tetraacyldisaccharide 1-phosphate intermediate (termed DS-1-P) to form tetraacyldisaccharide 1,4'-bis-phosphate (lipid IVA). In Shewanella oneidensis (strain ATCC 700550 / JCM 31522 / CIP 106686 / LMG 19005 / NCIMB 14063 / MR-1), this protein is Tetraacyldisaccharide 4'-kinase.